Here is a 531-residue protein sequence, read N- to C-terminus: 4-hydroxyphenylacetaldehyde oxime monooxygenase (531 aa).

A helical membrane pass occupies residues W18–S38. The heme b site is built by R122, R151, R466, and C468.

The protein belongs to the cytochrome P450 family. It depends on heme b as a cofactor.

It localises to the endoplasmic reticulum membrane. It catalyses the reaction (E)-4-hydroxyphenylacetaldehyde oxime + reduced [NADPH--hemoprotein reductase] + O2 = (S)-4-hydroxymandelonitrile + oxidized [NADPH--hemoprotein reductase] + 2 H2O + H(+). The catalysed reaction is (E)-4-hydroxyphenylacetaldehyde oxime = (Z)-(4-hydroxyphenyl)acetaldehyde oxime. It carries out the reaction (Z)-(4-hydroxyphenyl)acetaldehyde oxime = 4-hydroxyphenylacetonitrile + H2O. The enzyme catalyses 4-hydroxyphenylacetonitrile + reduced [NADPH--hemoprotein reductase] + O2 = (S)-4-hydroxymandelonitrile + oxidized [NADPH--hemoprotein reductase] + H2O + H(+). It functions in the pathway secondary metabolite biosynthesis; dhurrin biosynthesis; dhurrin from L-tyrosine: step 2/3. Its function is as follows. Cytochrome P450 involved in the biosynthesis of the cyanogenic glucoside dhurrin. Catalyzes the conversion of p-hydroxyphenylacetaldoxime to p-hydroxymandelonitrile via three different and successive activities: isomerization of the (E) isomer to the (Z) isomer of p-hydroxyphenylacetaldoxime, followed by dehydration of the oxime to the corresponding nitrile, and C-hydroxylation of the nitrile to produce p-hydroxymandelonitrile. This is 4-hydroxyphenylacetaldehyde oxime monooxygenase from Sorghum bicolor (Sorghum).